Here is a 156-residue protein sequence, read N- to C-terminus: ATP synthase subunit b (156 aa).

Residues 7 to 29 (LFGQTIAFAIFVWFCMKFVWPPL) form a helical membrane-spanning segment.

This sequence belongs to the ATPase B chain family. F-type ATPases have 2 components, F(1) - the catalytic core - and F(0) - the membrane proton channel. F(1) has five subunits: alpha(3), beta(3), gamma(1), delta(1), epsilon(1). F(0) has three main subunits: a(1), b(2) and c(10-14). The alpha and beta chains form an alternating ring which encloses part of the gamma chain. F(1) is attached to F(0) by a central stalk formed by the gamma and epsilon chains, while a peripheral stalk is formed by the delta and b chains.

It is found in the cell inner membrane. F(1)F(0) ATP synthase produces ATP from ADP in the presence of a proton or sodium gradient. F-type ATPases consist of two structural domains, F(1) containing the extramembraneous catalytic core and F(0) containing the membrane proton channel, linked together by a central stalk and a peripheral stalk. During catalysis, ATP synthesis in the catalytic domain of F(1) is coupled via a rotary mechanism of the central stalk subunits to proton translocation. Its function is as follows. Component of the F(0) channel, it forms part of the peripheral stalk, linking F(1) to F(0). The chain is ATP synthase subunit b from Ectopseudomonas mendocina (strain ymp) (Pseudomonas mendocina).